The chain runs to 172 residues: MNYFNVGKIVNTQGLQGEMRVLSVTDFAEERFKKGNKLALFDKKDQFVMDVEIASHRKAKNFDIIKFKGMYHINDIEKFRDFSLKVAEEDLADLEDGEFYYHEIIGLEVYENDVLLGTIKEILQPGANDVWVVKRKGKRDLLLPYIPPVVLGINIEQGRVDVEIPEGLDDEN.

Residues 96–168 (DGEFYYHEII…RVDVEIPEGL (73 aa)) enclose the PRC barrel domain.

The protein belongs to the RimM family. As to quaternary structure, binds ribosomal protein uS19.

The protein localises to the cytoplasm. An accessory protein needed during the final step in the assembly of 30S ribosomal subunit, possibly for assembly of the head region. Essential for efficient processing of 16S rRNA. May be needed both before and after RbfA during the maturation of 16S rRNA. It has affinity for free ribosomal 30S subunits but not for 70S ribosomes. This Streptococcus sanguinis (strain SK36) protein is Ribosome maturation factor RimM.